A 582-amino-acid chain; its full sequence is ATP-dependent lipid A-core flippase (582 aa).

Helical transmembrane passes span 25-45 (AGLI…TFML), 69-89 (LAVI…SYCI), 137-159 (ASSS…LFIM), 253-273 (PIIQ…ASFP), and 275-295 (VMET…IALM). Residues 28–310 (IVAAIALILN…LTNVNTQFQR (283 aa)) form the ABC transmembrane type-1 domain. The 237-residue stretch at 342-578 (IEFRHVTFYY…QGVYAQLNRM (237 aa)) folds into the ABC transporter domain. Residue 376-383 (GRSGSGKS) coordinates ATP.

It belongs to the ABC transporter superfamily. Lipid exporter (TC 3.A.1.106) family. As to quaternary structure, homodimer.

The protein resides in the cell inner membrane. The catalysed reaction is ATP + H2O + lipid A-core oligosaccharideSide 1 = ADP + phosphate + lipid A-core oligosaccharideSide 2.. Its function is as follows. Involved in lipopolysaccharide (LPS) biosynthesis. Translocates lipid A-core from the inner to the outer leaflet of the inner membrane. Transmembrane domains (TMD) form a pore in the inner membrane and the ATP-binding domain (NBD) is responsible for energy generation. This is ATP-dependent lipid A-core flippase from Yersinia pestis bv. Antiqua (strain Antiqua).